Consider the following 622-residue polypeptide: tRNA uridine 5-carboxymethylaminomethyl modification enzyme MnmG (622 aa).

An FAD-binding site is contributed by 10 to 15 (GGGHAG). An NAD(+)-binding site is contributed by 269-283 (GPRYCPSVEDKIVKF).

Belongs to the MnmG family. Homodimer. Heterotetramer of two MnmE and two MnmG subunits. Requires FAD as cofactor.

The protein resides in the cytoplasm. NAD-binding protein involved in the addition of a carboxymethylaminomethyl (cmnm) group at the wobble position (U34) of certain tRNAs, forming tRNA-cmnm(5)s(2)U34. The chain is tRNA uridine 5-carboxymethylaminomethyl modification enzyme MnmG from Bartonella quintana (strain Toulouse) (Rochalimaea quintana).